Reading from the N-terminus, the 582-residue chain is Sodium-dependent low-affinity dicarboxylate transporter 1 (582 aa).

Transmembrane regions (helical) follow at residues 17 to 37 (SFVIWGALLIFSPLLMFVGDS), 59 to 79 (ALPLAITAFIPMILFPLFGIM), 87 to 107 (AYLPDTCFLFMGGLMVALAVE), 130 to 150 (VMAGFMGVTGFLSMWISNTAT), 224 to 244 (LMLSVCFSANIGGAATITGTA), 271 to 291 (IFAFPMVFCCLIYCWCVLYLL), 317 to 337 (FSFAEMAVIFCFALLLVLWIL), 353 to 373 (EFVSDATSAMFIVILLFTLPE), 401 to 421 (FPWSVLFLLGGGFALAAGVKE), 455 to 475 (TNVCSNTVIASIFIPIVAELA), 482 to 502 (PLNFMLPVTISASFAFLLPVA), and 527 to 547 (VTLGCVVLSMLNMLLWAGFVF).

Belongs to the SLC13A/DASS transporter (TC 2.A.47) family. NADC subfamily. Nad-1 and nad-2 are coexpressed in the intestinal tract from early larvae to adults, expression is from the pharynx through to the anus. Expression level is significantly greater in the anterior half of the intestine than in the posterior half.

It is found in the membrane. Its function is as follows. Low affinity sodium-dicarboxylate cotransporter that accepts a range of tricarboxylic acid-cycle intermediates with 4-5 carbon atoms. There is no interaction with monocarboxylates. The chain is Sodium-dependent low-affinity dicarboxylate transporter 1 (nac-1) from Caenorhabditis elegans.